The sequence spans 437 residues: Nicotinate phosphoribosyltransferase (437 aa).

The residue at position 231 (His231) is a Phosphohistidine; by autocatalysis.

Belongs to the NAPRTase family. In terms of processing, transiently phosphorylated on a His residue during the reaction cycle. Phosphorylation strongly increases the affinity for substrates and increases the rate of nicotinate D-ribonucleotide production. Dephosphorylation regenerates the low-affinity form of the enzyme, leading to product release.

The catalysed reaction is nicotinate + 5-phospho-alpha-D-ribose 1-diphosphate + ATP + H2O = nicotinate beta-D-ribonucleotide + ADP + phosphate + diphosphate. It functions in the pathway cofactor biosynthesis; NAD(+) biosynthesis; nicotinate D-ribonucleotide from nicotinate: step 1/1. Catalyzes the synthesis of beta-nicotinate D-ribonucleotide from nicotinate and 5-phospho-D-ribose 1-phosphate at the expense of ATP. The chain is Nicotinate phosphoribosyltransferase from Vibrio vulnificus (strain YJ016).